Consider the following 890-residue polypeptide: MLLNMNLQELKQKYNYDVATKMMQQYLDIKFAHLDCLLLFRMGDFYEMFYEDAILASNVLGIALTKRGKNGEEEIAMCGVPYHALENYLTKLIEANYKVAICDQLETPEEAKNRGGYKAVVTRDVTRIITPGTIIEENLIASAEPNYLASLVIPKNKETASLCYVDLSTSEIVVVNVPETEILNELARLKPREILLSENLRSSNLADSIFKQLNLRITYQVDSFFAINKCEKIILDFYKMKDIKGIGEISSSQICAIGSVLEYLSLTQKQNIPHLPIPRIIKFHSYMTIDFSTRRNLEIVTNSQGGSQGSLLSTLNHTVTKQGGRLLYNFLSSPLTNIAKINHRLNITEFFYSNLEIVKKIRELLKKTSDIERCLTRITMNRSSGRDLLSIKYTLETATIIKGVFFDAYGFNLPDFIEKIIKPLSGDAELYNLIDETIREDAPNNLNDGGIIKHEYHPKVAQLHDLINNGKLYIEKLKDQYRKETGIDSLKISHNNVIGLFIDITAKNVNKILDPKFIHRQTTVNHVRYTTAELQKLESELVNAKTLVISLEKELYADICSQVIEKASYLRILASSLSGLDVFCNFAYIADEYDYVKPEFTDDLSFDIVKGRHPVVEKALQRESKSFVYNDCHLSELERIWLITGPNMAGKSTFLRQNAIIAIIAQIGSFVPAKSAKIGVVDKIFSRIGAADDLIKGQSTFMAEMLETSAILAQSTKNSLIILDEVGRGTSTYDGVSIAWSVLEYIHDKLKCRCLFATHYHELTVMSNFLPALQNYTIAIEESGKDILFLHNIISGAADRSYGLHVASLAGLPASVINRAEQILLKFEKTSTGKGKNILSTESNNLSLFYLEPNKTTISSKLDKKFRTIDPDKLSPKEALELIYELKKLV.

645-652 (GPNMAGKS) lines the ATP pocket.

The protein belongs to the DNA mismatch repair MutS family.

In terms of biological role, this protein is involved in the repair of mismatches in DNA. It is possible that it carries out the mismatch recognition step. This protein has a weak ATPase activity. The chain is DNA mismatch repair protein MutS from Rickettsia africae (strain ESF-5).